A 62-amino-acid chain; its full sequence is Large ribosomal subunit protein uL30 (62 aa).

The protein belongs to the universal ribosomal protein uL30 family. In terms of assembly, part of the 50S ribosomal subunit.

The chain is Large ribosomal subunit protein uL30 from Staphylococcus carnosus (strain TM300).